We begin with the raw amino-acid sequence, 447 residues long: Peptide chain release factor 1, mitochondrial (447 aa).

The transit peptide at 1 to 63 (MNRRHLFAWL…LLNKNCSRRY (63 aa)) directs the protein to the mitochondrion. Residues 299-363 (PKDLRIDTFR…LRARLYQQII (65 aa)) form a GGQ domain region. A GGQ motif is present at residues 313-315 (GGQ). The residue at position 315 (glutamine 315) is an N5-methylglutamine.

It belongs to the prokaryotic/mitochondrial release factor family. Post-translationally, methylation of glutamine in the GGQ triplet by HEMK1 is conserved from bacteria to mammals.

It localises to the mitochondrion. In terms of biological role, mitochondrial peptide chain release factor that directs the termination of translation in response to the peptide chain non-canonical stop codons AGG and AGA. Non-canonical termination codons AGG and AGA are found at the end of MT-CO1/COX1 and MT-ND6/ND6 open reading frames, respectively. Recognizes non-canonical stop codons via a network of interactions between the codon, MTRF1 and the ribosomal RNA (rRNA): in contrast to other translation release factors, which identify the codon in the A-site via direct interactions of amino acid side chains with the bases, MTRF1 repositions the first 2 bases of the stop codon to use an intricate network of interactions that includes residues of the release factor, the rRNA of the small ribosomal subunit, as well as neighboring bases of the mRNA. The sequence is that of Peptide chain release factor 1, mitochondrial (MTRF1) from Bos taurus (Bovine).